Consider the following 462-residue polypeptide: Glutamate--tRNA ligase 2 (462 aa).

A 'HIGH' region motif is present at residues 8–18 (PSPTGYLHIGG). Positions 236 to 240 (KLSKR) match the 'KMSKS' region motif. Lysine 239 contributes to the ATP binding site.

It belongs to the class-I aminoacyl-tRNA synthetase family. Glutamate--tRNA ligase type 1 subfamily. As to quaternary structure, monomer.

The protein resides in the cytoplasm. The enzyme catalyses tRNA(Glu) + L-glutamate + ATP = L-glutamyl-tRNA(Glu) + AMP + diphosphate. In terms of biological role, catalyzes the attachment of glutamate to tRNA(Glu) in a two-step reaction: glutamate is first activated by ATP to form Glu-AMP and then transferred to the acceptor end of tRNA(Glu). This Nitratiruptor sp. (strain SB155-2) protein is Glutamate--tRNA ligase 2.